The following is a 329-amino-acid chain: MEVAEPSSPTEEEEEEEEHSAEPRPHTRSNPEGAEDRAVAAQASVGSHSEGEGEAASADDGSPSTSGAGPKSWQVPPPAPEVQIRTPRVNCPEKVIICLDLSEEMSLPKLESFNGSKTNALNISQKMIEMFVRTKHKIDKSHEFALVVVNDDTAWLSGLTSDPRELCSCLYDLETASCSTFNLEGLFSLIQQKTEFPVTENVQTIPPPYVVRTILVYSRPPCQPQFSLTEPMKKMFQCPYFFFDLVYIHNGAEEKEEEMSWKDMFAFMGSLDTKGTSYKYEVALAGPALELHNCMVKLLAHPLQRPCQSHASYSLLEEEDEATEVEATV.

N-acetylmethionine is present on Met1. A disordered region spans residues 1 to 86 (MEVAEPSSPT…PPAPEVQIRT (86 aa)). Ser8 is subject to Phosphoserine. Residues 10–19 (TEEEEEEEEH) are compositionally biased toward acidic residues. Ser29, Ser49, Ser57, and Ser62 each carry phosphoserine. Thr65 is modified (phosphothreonine). Ser66 carries the phosphoserine modification. The VWFA-like stretch occupies residues 95 to 298 (VIICLDLSEE…LELHNCMVKL (204 aa)).

It belongs to the BABAM1 family. In terms of assembly, component of the ARISC complex, at least composed of UIMC1/RAP80, ABRAXAS1, BRCC3/BRCC36, BABAM2 and BABAM1/NBA1. Component of the BRCA1-A complex, at least composed of BRCA1, BARD1, UIMC1/RAP80, ABRAXAS1, BRCC3/BRCC36, BABAM2 and BABAM1/NBA1. In the BRCA1-A complex, interacts directly with ABRAXAS1 and BABAM2. Component of the BRISC complex, at least composed of ABRAXAS2, BRCC3/BRCC36, BABAM2 and BABAM1/NBA1. Identified in a complex with SHMT2 and the other subunits of the BRISC complex.

Its subcellular location is the cytoplasm. The protein resides in the nucleus. In terms of biological role, component of the BRCA1-A complex, a complex that specifically recognizes 'Lys-63'-linked ubiquitinated histones H2A and H2AX at DNA lesions sites, leading to target the BRCA1-BARD1 heterodimer to sites of DNA damage at double-strand breaks (DSBs). The BRCA1-A complex also possesses deubiquitinase activity that specifically removes 'Lys-63'-linked ubiquitin on histones H2A and H2AX. In the BRCA1-A complex, it is required for the complex integrity and its localization at DSBs. Component of the BRISC complex, a multiprotein complex that specifically cleaves 'Lys-63'-linked ubiquitin in various substrates. In these 2 complexes, it is probably required to maintain the stability of BABAM2 and help the 'Lys-63'-linked deubiquitinase activity mediated by BRCC3/BRCC36 component. The BRISC complex is required for normal mitotic spindle assembly and microtubule attachment to kinetochores via its role in deubiquitinating NUMA1. Plays a role in interferon signaling via its role in the deubiquitination of the interferon receptor IFNAR1; deubiquitination increases IFNAR1 activity by enhancing its stability and cell surface expression. Down-regulates the response to bacterial lipopolysaccharide (LPS) via its role in IFNAR1 deubiquitination. The chain is BRISC and BRCA1-A complex member 1 (BABAM1) from Callithrix jacchus (White-tufted-ear marmoset).